The primary structure comprises 501 residues: ATP-dependent rRNA helicase RRP3 (501 aa).

Residues 3–44 (KIVKRKEKKANDELTSLAEKIRAKALENQKKLIEAEKEGGSE) are a coiled coil. Residues 36-79 (EAEKEGGSESDSEEDATAEKKKVLKSKSKSTVSTQNENTNEDES) are disordered. 3 positions are modified to phosphoserine: S43, S45, and S47. Residues 81-109 (ESFSELNLVPELIQACKNLNYSKPTPIQS) carry the Q motif motif. The 173-residue stretch at 112-284 (IPPALEGHDI…RASLTNPVKC (173 aa)) folds into the Helicase ATP-binding domain. 125 to 132 (AQTGSGKT) contributes to the ATP binding site. The short motif at 231-234 (DEAD) is the DEAD box element. The 155-residue stretch at 307–461 (LKNTYLIYLL…NIILTLRDSV (155 aa)) folds into the Helicase C-terminal domain. Residues 480 to 501 (IARGKGRRGRMMTRENMDMGER) are disordered. Over residues 491 to 501 (MTRENMDMGER) the composition is skewed to basic and acidic residues.

It belongs to the DEAD box helicase family. DDX47/RRP3 subfamily. In terms of assembly, interacts with the SSU processome.

The protein resides in the nucleus. The catalysed reaction is ATP + H2O = ADP + phosphate + H(+). In terms of biological role, ATP-dependent rRNA helicase required for pre-ribosomal RNA processing. Involved in the maturation of the 35S-pre-rRNA and to its cleavage to mature 18S rRNA. The sequence is that of ATP-dependent rRNA helicase RRP3 from Saccharomyces cerevisiae (strain YJM789) (Baker's yeast).